The following is a 229-amino-acid chain: MIRAIVTDIEGTTSDIRFVHNVLFPYARERLAGFVTAQQYAEPVKTILDNLRRETDAPAASTADLITTLFAFMDEDRKSTALKALQGIIWRDGYLNGDFTGHLYPDVLPALEKWKAQGIDLYVYSSGSVAAQKLLFGYSDEGDITHLFTGYFDTLVGAKREVQSYRNIAEHLGHAPGTILFLSDIHQELDAAEAAGLRTIQLVRGDRDPASHHPQVQRFDDIHPEQIPA.

The disordered stretch occupies residues 207 to 229 (RDPASHHPQVQRFDDIHPEQIPA). The segment covering 218-229 (RFDDIHPEQIPA) has biased composition (basic and acidic residues).

The protein belongs to the HAD-like hydrolase superfamily. MasA/MtnC family. In terms of assembly, monomer. Requires Mg(2+) as cofactor.

The catalysed reaction is 5-methylsulfanyl-2,3-dioxopentyl phosphate + H2O = 1,2-dihydroxy-5-(methylsulfanyl)pent-1-en-3-one + phosphate. It functions in the pathway amino-acid biosynthesis; L-methionine biosynthesis via salvage pathway; L-methionine from S-methyl-5-thio-alpha-D-ribose 1-phosphate: step 3/6. It participates in amino-acid biosynthesis; L-methionine biosynthesis via salvage pathway; L-methionine from S-methyl-5-thio-alpha-D-ribose 1-phosphate: step 4/6. Bifunctional enzyme that catalyzes the enolization of 2,3-diketo-5-methylthiopentyl-1-phosphate (DK-MTP-1-P) into the intermediate 2-hydroxy-3-keto-5-methylthiopentenyl-1-phosphate (HK-MTPenyl-1-P), which is then dephosphorylated to form the acireductone 1,2-dihydroxy-3-keto-5-methylthiopentene (DHK-MTPene). The polypeptide is Enolase-phosphatase E1 (Klebsiella pneumoniae (strain 342)).